The primary structure comprises 342 residues: Trans-3-hydroxy-L-proline dehydratase (342 aa).

Serine 90 functions as the Proton acceptor in the catalytic mechanism. Substrate contacts are provided by residues 91 to 92 (GS), aspartate 252, and 257 to 258 (GT).

It belongs to the proline racemase family.

It catalyses the reaction trans-3-hydroxy-L-proline = 1-pyrroline-2-carboxylate + H2O. Its function is as follows. Catalyzes the dehydration of trans-3-hydroxy-L-proline (t3LHyp) to Delta(1)-pyrroline-2-carboxylate (Pyr2C). Can also catalyze the epimerization of trans-4-hydroxy-L-proline (t4LHyp) to cis-4-hydroxy-D-proline (c4DHyp), albeit with 150-fold lower efficiency. May be involved in the degradation pathway that converts t3LHyp to L-proline, which would allow R.meliloti to grow on t3LHyp as a sole carbon source. Displays no proline racemase activity. The chain is Trans-3-hydroxy-L-proline dehydratase from Rhizobium meliloti (strain 1021) (Ensifer meliloti).